A 2201-amino-acid chain; its full sequence is Tenascin (2201 aa).

The signal sequence occupies residues 1 to 22 (MGAMTQLLAGVFLAFLALATEG). Asparagine 38 carries an N-linked (GlcNAc...) asparagine glycan. 2 positions are modified to phosphoserine: serine 65 and serine 70. Serine 72 carries the phosphoserine; by FAM20C modification. Residue serine 72 is glycosylated (O-linked (Xyl...) (chondroitin sulfate) serine). Residues 118–145 (DVKELLSRLEELENLVSSLREQCTAGAG) adopt a coiled-coil conformation. Residues asparagine 166 and asparagine 184 are each glycosylated (N-linked (GlcNAc...) asparagine). The region spanning 174 to 186 (CVCEPGWKGPNCS) is the EGF-like 1; incomplete domain. EGF-like domains lie at 186–217 (SEPECPGNCHLRGRCIDGQCICDDGFTGEDCS), 217–248 (SQLACPSDCNDQGKCVNGVCICFEGYAGADCS), 248–280 (SREICPVPCSEEHGTCVDGLCVCHDGFAGDDCN), 280–311 (NKPLCLNNCYNRGRCVENECVCDEGFTGEDCS), 311–342 (SELICPNDCFDRGRCINGTCYCEEGFTGEDCG), 342–373 (GKPTCPHACHTQGRCEEGQCVCDEGFAGVDCS), 373–404 (SEKRCPADCHNRGRCVDGRCECDDGFTGADCG), 404–435 (GELKCPNGCSGHGRCVNGQCVCDEGYTGEDCS), 435–466 (SQLRCPNDCHSRGRCVEGKCVCEQGFKGYDCS), 466–497 (SDMSCPNDCHQHGRCVNGMCVCDDGYTGEDCR), 497–528 (RDRQCPRDCSNRGLCVDGQCVCEDGFTGPDCA), 528–559 (AELSCPNDCHGQGRCVNGQCVCHEGFMGKDCK), 559–590 (KEQRCPSDCHGQGRCVDGQCICHEGFTGLDCG), and 590–621 (GQHSCPSDCNNLGQCVSGRCICNEGYSGEDCS). Disulfide bonds link cysteine 190–cysteine 200, cysteine 194–cysteine 205, cysteine 207–cysteine 216, cysteine 221–cysteine 231, cysteine 225–cysteine 236, cysteine 238–cysteine 247, cysteine 252–cysteine 263, cysteine 256–cysteine 268, cysteine 270–cysteine 279, cysteine 284–cysteine 294, cysteine 288–cysteine 299, cysteine 301–cysteine 310, cysteine 315–cysteine 325, cysteine 319–cysteine 330, cysteine 332–cysteine 341, cysteine 346–cysteine 356, cysteine 350–cysteine 361, cysteine 363–cysteine 372, cysteine 377–cysteine 387, cysteine 381–cysteine 392, cysteine 394–cysteine 403, cysteine 408–cysteine 418, cysteine 412–cysteine 423, cysteine 425–cysteine 434, cysteine 439–cysteine 449, cysteine 443–cysteine 454, cysteine 456–cysteine 465, cysteine 470–cysteine 480, cysteine 474–cysteine 485, cysteine 487–cysteine 496, cysteine 501–cysteine 511, cysteine 505–cysteine 516, cysteine 518–cysteine 527, cysteine 532–cysteine 542, cysteine 536–cysteine 547, cysteine 549–cysteine 558, cysteine 563–cysteine 573, cysteine 567–cysteine 578, cysteine 580–cysteine 589, cysteine 594–cysteine 604, cysteine 598–cysteine 609, and cysteine 611–cysteine 620. N-linked (GlcNAc...) asparagine glycosylation is present at asparagine 327. Fibronectin type-III domains lie at 625-715 (PPKD…LPAP), 716-804 (EGLK…TRLD), 805-894 (APSQ…TGLD), 895-990 (APRN…TPKD), 991-1075 (LQVS…EQAP), 1076-1165 (ELEN…TGET), 1167-1256 (NLGE…TEEV), 1258-1350 (DMGN…LPQL), 1351-1439 (GDLA…AKEP), 1440-1531 (EIGN…ALPL), 1533-1621 (ENLT…EAEP), 1622-1711 (EVDN…TAMG), 1712-1801 (SPKE…ALDG), 1802-1888 (PSGL…TDLD), and 1889-1977 (SPRD…IGLL). An N-linked (GlcNAc...) asparagine glycan is attached at asparagine 788. At threonine 905 the chain carries Phosphothreonine. Asparagine 1018, asparagine 1034, asparagine 1079, asparagine 1093, asparagine 1119, asparagine 1184, asparagine 1210, asparagine 1261, asparagine 1275, asparagine 1301, asparagine 1366, asparagine 1392, asparagine 1445, asparagine 1455, asparagine 1485, and asparagine 1534 each carry an N-linked (GlcNAc...) asparagine glycan. An N-linked (GlcNAc...) asparagine glycan is attached at asparagine 1809. The 216-residue stretch at 1975 to 2190 (GLLYPFPKDC…FAEMKLRPSN (216 aa)) folds into the Fibrinogen C-terminal domain. Residue asparagine 2162 is glycosylated (N-linked (GlcNAc...) asparagine).

The protein belongs to the tenascin family. As to quaternary structure, homohexamer; disulfide-linked. A homotrimer may be formed in the triple coiled-coil region and may be stabilized by disulfide rings at both ends. Two of such half-hexabrachions may be disulfide linked within the central globule. Interacts with CSPG4. Interacts (via the 3rd fibronectin type-III domain) with integrin ITGA9:ITGB1. Detected in fibroblasts (at protein level).

The protein localises to the secreted. It localises to the extracellular space. Its subcellular location is the extracellular matrix. Functionally, extracellular matrix protein implicated in guidance of migrating neurons as well as axons during development, synaptic plasticity as well as neuronal regeneration. Promotes neurite outgrowth from cortical neurons grown on a monolayer of astrocytes. Ligand for integrins alpha-8/beta-1, alpha-9/beta-1, alpha-V/beta-3 and alpha-V/beta-6. In tumors, stimulates angiogenesis by elongation, migration and sprouting of endothelial cells. This chain is Tenascin (TNC), found in Homo sapiens (Human).